Here is a 376-residue protein sequence, read N- to C-terminus: TelA-like protein SE_1089 (376 aa).

Belongs to the TelA family.

This Staphylococcus epidermidis (strain ATCC 12228 / FDA PCI 1200) protein is TelA-like protein SE_1089.